The chain runs to 124 residues: Small ribosomal subunit protein uS12 (124 aa).

Asp-89 is modified (3-methylthioaspartic acid).

This sequence belongs to the universal ribosomal protein uS12 family. In terms of assembly, part of the 30S ribosomal subunit. Contacts proteins S8 and S17. May interact with IF1 in the 30S initiation complex.

Functionally, with S4 and S5 plays an important role in translational accuracy. Its function is as follows. Interacts with and stabilizes bases of the 16S rRNA that are involved in tRNA selection in the A site and with the mRNA backbone. Located at the interface of the 30S and 50S subunits, it traverses the body of the 30S subunit contacting proteins on the other side and probably holding the rRNA structure together. The combined cluster of proteins S8, S12 and S17 appears to hold together the shoulder and platform of the 30S subunit. This is Small ribosomal subunit protein uS12 from Vibrio atlanticus (strain LGP32) (Vibrio splendidus (strain Mel32)).